Reading from the N-terminus, the 291-residue chain is Small ribosomal subunit biogenesis GTPase RsgA (291 aa).

The 159-residue stretch at 63-221 folds into the CP-type G domain; that stretch reads KNEIKRPPVS…IADTPGFSAL (159 aa). GTP-binding positions include 112 to 115 and 164 to 172; these read TKKD and GQSGVGKST. Zn(2+)-binding residues include cysteine 245, cysteine 250, histidine 252, and cysteine 258.

Belongs to the TRAFAC class YlqF/YawG GTPase family. RsgA subfamily. Monomer. Associates with 30S ribosomal subunit, binds 16S rRNA. Zn(2+) is required as a cofactor.

Its subcellular location is the cytoplasm. Its function is as follows. One of several proteins that assist in the late maturation steps of the functional core of the 30S ribosomal subunit. Helps release RbfA from mature subunits. May play a role in the assembly of ribosomal proteins into the subunit. Circularly permuted GTPase that catalyzes slow GTP hydrolysis, GTPase activity is stimulated by the 30S ribosomal subunit. This is Small ribosomal subunit biogenesis GTPase RsgA from Staphylococcus saprophyticus subsp. saprophyticus (strain ATCC 15305 / DSM 20229 / NCIMB 8711 / NCTC 7292 / S-41).